The chain runs to 335 residues: ATP-dependent 6-phosphofructokinase (335 aa).

Glycine 11 lines the ATP pocket. 21–25 serves as a coordination point for ADP; sequence RAVVR. ATP contacts are provided by residues 72-73 and 102-105; these read RY and GDGS. Residue aspartate 103 coordinates Mg(2+). 125–127 provides a ligand contact to substrate; sequence TID. Aspartate 127 serves as the catalytic Proton acceptor. Arginine 154 is an ADP binding site. Substrate-binding positions include arginine 162 and 169–171; that span reads MGR. ADP-binding positions include 185 to 187 and 213 to 215; these read GAD and KKH. Substrate is bound by residues glutamate 222, arginine 244, and 250–253; that span reads HIQR.

It belongs to the phosphofructokinase type A (PFKA) family. ATP-dependent PFK group I subfamily. Prokaryotic clade 'B1' sub-subfamily. Homotetramer. It depends on Mg(2+) as a cofactor.

The protein localises to the cytoplasm. It catalyses the reaction beta-D-fructose 6-phosphate + ATP = beta-D-fructose 1,6-bisphosphate + ADP + H(+). The protein operates within carbohydrate degradation; glycolysis; D-glyceraldehyde 3-phosphate and glycerone phosphate from D-glucose: step 3/4. Its activity is regulated as follows. Allosterically activated by ADP and other diphosphonucleosides, and allosterically inhibited by phosphoenolpyruvate. Its function is as follows. Catalyzes the phosphorylation of D-fructose 6-phosphate to fructose 1,6-bisphosphate by ATP, the first committing step of glycolysis. The sequence is that of ATP-dependent 6-phosphofructokinase from Streptococcus pneumoniae (strain CGSP14).